The following is a 346-amino-acid chain: Annexin A1 (346 aa).

An N-acetylalanine modification is found at Ala2. Ser5 carries the phosphoserine; by TRPM7 modification. Residue Gln19 forms an Isoglutamyl lysine isopeptide (Gln-Lys) (interchain with K-?) linkage. Tyr21 is subject to Phosphotyrosine. The residue at position 27 (Ser27) is a Phosphoserine; by PKC. Phosphoserine is present on residues Ser34 and Ser37. Annexin repeat units follow at residues 42–113, 114–185, 197–269, and 273–344; these read FNVS…AMLK, TPAQ…ALAK, DLAD…TIVK, and STPA…ALCG. Lys58 is subject to N6-acetyllysine. The Ca(2+) site is built by Gly59, Val60, Glu62, Arg97, Leu100, Glu105, Met127, Gly129, Gly131, Thr132, and Glu134. Thr136 carries the post-translational modification Phosphothreonine. Asp171, Gly210, and Arg213 together coordinate Ca(2+). A Glycyl lysine isopeptide (Lys-Gly) (interchain with G-Cter in SUMO1); alternate cross-link involves residue Lys214. Lys214 participates in a covalent cross-link: Glycyl lysine isopeptide (Lys-Gly) (interchain with G-Cter in SUMO2); alternate. Gly215, Asp253, Glu255, and Leu256 together coordinate Ca(2+). Lys257 is covalently cross-linked (Glycyl lysine isopeptide (Lys-Gly) (interchain with G-Cter in SUMO1)). Glu261, Met286, Gly288, and Gly290 together coordinate Ca(2+). An N6-acetyllysine modification is found at Lys312. The cysteines at positions 324 and 343 are disulfide-linked. Ca(2+) contacts are provided by Leu328, Glu330, and Thr331. A Glycyl lysine isopeptide (Lys-Gly) (interchain with G-Cter in SUMO1) cross-link involves residue Lys332. Residue Glu336 participates in Ca(2+) binding.

Belongs to the annexin family. In terms of assembly, homodimer; non-covalently linked. Homodimer; linked by transglutamylation. Homodimers linked by transglutamylation are observed in placenta, but not in other tissues. Interacts with S100A11. Heterotetramer, formed by two molecules each of S100A11 and ANXA1. Interacts with DYSF. Interacts with EGFR. In terms of processing, phosphorylated by protein kinase C, EGFR and TRPM7. Phosphorylated in response to EGF treatment. Sumoylated. Post-translationally, proteolytically cleaved by cathepsin CTSG to release the active N-terminal peptide Ac2-26. Detected in lung. Detected at the apical membrane of airway epithelial cells. Detected in intestinal epithelial cells. Detected in skeletal muscle. Detected in prostate. Detected in thymus (at protein level). Detected in stomach, lung, spleen, ovary and uterus, and at lower levels in kidney, thymus and heart.

The protein localises to the nucleus. Its subcellular location is the cytoplasm. The protein resides in the cell projection. It is found in the cilium. It localises to the basolateral cell membrane. The protein localises to the lateral cell membrane. Its subcellular location is the cell membrane. The protein resides in the apical cell membrane. It is found in the membrane. It localises to the early endosome. The protein localises to the cytoplasmic vesicle membrane. Its subcellular location is the endosome membrane. The protein resides in the secreted. It is found in the extracellular space. It localises to the extracellular exosome. The protein localises to the cytoplasmic vesicle. Its subcellular location is the secretory vesicle lumen. The protein resides in the phagocytic cup. Plays important roles in the innate immune response as effector of glucocorticoid-mediated responses and regulator of the inflammatory process. Has anti-inflammatory activity. Plays a role in glucocorticoid-mediated down-regulation of the early phase of the inflammatory response. Contributes to the adaptive immune response by enhancing signaling cascades that are triggered by T-cell activation, regulates differentiation and proliferation of activated T-cells. Promotes the differentiation of T-cells into Th1 cells and negatively regulates differentiation into Th2 cells. Has no effect on unstimulated T-cells. Negatively regulates hormone exocytosis via activation of the formyl peptide receptors and reorganization of the actin cytoskeleton. Has high affinity for Ca(2+) and can bind up to eight Ca(2+) ions. Displays Ca(2+)-dependent binding to phospholipid membranes. Plays a role in the formation of phagocytic cups and phagosomes. Plays a role in phagocytosis by mediating the Ca(2+)-dependent interaction between phagosomes and the actin cytoskeleton. In terms of biological role, functions at least in part by activating the formyl peptide receptors and downstream signaling cascades. Promotes chemotaxis of granulocytes and monocytes via activation of the formyl peptide receptors. Promotes rearrangement of the actin cytoskeleton, cell polarization and cell migration. Promotes resolution of inflammation and wound healing. Acts via neutrophil N-formyl peptide receptors to enhance the release of CXCL2. The chain is Annexin A1 (Anxa1) from Mus musculus (Mouse).